A 319-amino-acid polypeptide reads, in one-letter code: N-acyl-aromatic-L-amino acid amidohydrolase (carboxylate-forming) (319 aa).

Positions 1–210 (MCSLPVPREP…TVLDFIELFN (210 aa)) are hydrolytic domain. Histidine 21 and glutamate 24 together coordinate Zn(2+). Residues arginine 63 and 70-71 (NR) each bind substrate. Residue histidine 116 coordinates Zn(2+). Residues glutamate 178 and tyrosine 288 each coordinate substrate. The interval 211–318 (QGTAFPAFEM…PALTPAPSPA (108 aa)) is shielding domain.

Belongs to the AspA/AstE family. Aspartoacylase subfamily. Exists as a mixture of homodimers and homotetramer, both catalytically active. As to quaternary structure, (Microbial infection) Interacts with hepatitis C virus/HCV core protein. Zn(2+) is required as a cofactor.

It is found in the apical cell membrane. It localises to the cytoplasm. It catalyses the reaction an N-acyl-aromatic L-alpha-amino acid + H2O = an aromatic L-alpha-amino acid + a carboxylate. The catalysed reaction is an N-acetyl-L-cysteine-S-conjugate + H2O = an S-substituted L-cysteine + acetate. Its function is as follows. Plays an important role in deacetylating mercapturic acids in kidney proximal tubules. Also acts on N-acetyl-aromatic amino acids. The sequence is that of N-acyl-aromatic-L-amino acid amidohydrolase (carboxylate-forming) (ACY3) from Homo sapiens (Human).